The sequence spans 522 residues: Peptide chain release factor 3 (522 aa).

Residues 10-277 form the tr-type G domain; it reads ASRKTFAIIS…TFVDFAPAPS (268 aa). Residues 19–26, 87–91, and 141–144 each bind GTP; these read SHPDAGKT, DTPGH, and NKMD.

The protein belongs to the TRAFAC class translation factor GTPase superfamily. Classic translation factor GTPase family. PrfC subfamily.

It localises to the cytoplasm. In terms of biological role, increases the formation of ribosomal termination complexes and stimulates activities of RF-1 and RF-2. It binds guanine nucleotides and has strong preference for UGA stop codons. It may interact directly with the ribosome. The stimulation of RF-1 and RF-2 is significantly reduced by GTP and GDP, but not by GMP. This Listeria monocytogenes serovar 1/2a (strain ATCC BAA-679 / EGD-e) protein is Peptide chain release factor 3.